The chain runs to 664 residues: Kinesin-like protein KIF2B (664 aa).

T125 bears the Phosphothreonine; by PLK1 mark. Residues 149-177 (CLREIEKLQKQREKRRRLQLEIRARRALD) are a coiled coil. Position 204 is a phosphoserine; by PLK1 (S204). Residues 213–543 (RICVCVRKRP…LRYANRVKEL (331 aa)) enclose the Kinesin motor domain. 303–310 (GQTGSGKT) is a binding site for ATP. The interval 583 to 607 (VQKEEEKESDELTSTKEPAASWSRS) is disordered. Positions 642-663 (VLTEIQKKLQLLRDDLQKKSQA) form a coiled coil.

The protein belongs to the TRAFAC class myosin-kinesin ATPase superfamily. Kinesin family. MCAK/KIF2 subfamily. Post-translationally, phosphorylation at Thr-125 by PLK1 is required for activity in the correction of kinetochore-microtubules attachment errors, while phosphorylation at Ser-204 also by PLK1 is required for the kinetochore localization and activity in prometaphase.

Its subcellular location is the cytoplasm. The protein resides in the cytoskeleton. The protein localises to the microtubule organizing center. It is found in the centrosome. It localises to the spindle. Its subcellular location is the chromosome. The protein resides in the centromere. The protein localises to the kinetochore. Its function is as follows. Plus end-directed microtubule-dependent motor required for spindle assembly and chromosome movement. Has microtubule depolymerization activity. Plays a role in chromosome congression. The chain is Kinesin-like protein KIF2B from Rattus norvegicus (Rat).